An 89-amino-acid chain; its full sequence is MAIEQTQKDEIIKQYARHDGDTGSPEVQIAVLTAEILALNDHLSVHKKDHHSYVGLMKKIGHRRNLLAYLRNKDITRYRDLIKALGLRR.

It belongs to the universal ribosomal protein uS15 family. In terms of assembly, part of the 30S ribosomal subunit. Forms a bridge to the 50S subunit in the 70S ribosome, contacting the 23S rRNA.

Functionally, one of the primary rRNA binding proteins, it binds directly to 16S rRNA where it helps nucleate assembly of the platform of the 30S subunit by binding and bridging several RNA helices of the 16S rRNA. Forms an intersubunit bridge (bridge B4) with the 23S rRNA of the 50S subunit in the ribosome. This chain is Small ribosomal subunit protein uS15, found in Lacticaseibacillus casei (strain BL23) (Lactobacillus casei).